The sequence spans 552 residues: ATP synthase subunit alpha (552 aa).

173–180 (GDRQTGKT) contributes to the ATP binding site. The tract at residues 526–552 (ASPLDPSAVRKESIPVHRAPARTDDEG) is disordered. Positions 533 to 552 (AVRKESIPVHRAPARTDDEG) are enriched in basic and acidic residues.

This sequence belongs to the ATPase alpha/beta chains family. In terms of assembly, F-type ATPases have 2 components, CF(1) - the catalytic core - and CF(0) - the membrane proton channel. CF(1) has five subunits: alpha(3), beta(3), gamma(1), delta(1), epsilon(1). CF(0) has three main subunits: a(1), b(2) and c(9-12). The alpha and beta chains form an alternating ring which encloses part of the gamma chain. CF(1) is attached to CF(0) by a central stalk formed by the gamma and epsilon chains, while a peripheral stalk is formed by the delta and b chains.

It localises to the cell membrane. It catalyses the reaction ATP + H2O + 4 H(+)(in) = ADP + phosphate + 5 H(+)(out). Its function is as follows. Produces ATP from ADP in the presence of a proton gradient across the membrane. The alpha chain is a regulatory subunit. This is ATP synthase subunit alpha from Frankia alni (strain DSM 45986 / CECT 9034 / ACN14a).